Reading from the N-terminus, the 449-residue chain is Myb family transcription factor PHL6 (449 aa).

Residues 49 to 72 (PFIRSQSPDSPGQLWPKNSSQSTF) are disordered. In terms of domain architecture, HTH myb-type spans 238–298 (ANQKSRMRWT…HLQKYRLAKY (61 aa)). A DNA-binding region (H-T-H motif) is located at residues 269 to 294 (PKAVKKLMNVEGLTIYHVKSHLQKYR). The interval 301–327 (EKKEEKRTDNSEEKKLALSKSEADEKK) is disordered. The tract at residues 334–354 (TEALRMQMEVQKQLHEQLEVQ) is coiled coil. The LHEQLE signature appears at 347–352 (LHEQLE). The tract at residues 376 to 449 (RKTGRWISSS…NIAESEDPKR (74 aa)) is disordered. Residues 381–410 (WISSSSQTVLSPSDDSIPDSQNMSKTKASS) are compositionally biased toward polar residues.

This sequence belongs to the MYB-CC family.

It is found in the nucleus. This Arabidopsis thaliana (Mouse-ear cress) protein is Myb family transcription factor PHL6.